Consider the following 632-residue polypeptide: MAU2 chromatid cohesion factor homolog (632 aa).

TPR repeat units follow at residues 453-486 and 493-526; these read GGFYYVQGLHAFHKNSFHEAKRFLRETLKMANAE and SCSLVLLSHVFLSIGNSKESMNMVTPAMQLASKI.

Belongs to the SCC4/mau-2 family. In terms of assembly, interacts with Nipped-B to form the cohesin loading complex.

It is found in the nucleus. The protein resides in the nucleoplasm. Required for association of the cohesin complex with chromatin during interphase. Plays a role in sister chromatid cohesion and normal progression through prometaphase. In Drosophila yakuba (Fruit fly), this protein is MAU2 chromatid cohesion factor homolog.